A 632-amino-acid polypeptide reads, in one-letter code: Probable potassium transport system protein Kup 2 (632 aa).

12 helical membrane-spanning segments follow: residues 19-39, 58-78, 110-130, 147-167, 178-198, 216-236, 257-277, 290-310, 347-367, 377-397, 404-424, and 429-449; these read FWGL…TSPL, MIVL…VTAK, MFLM…SMIT, PALE…LFAV, AFGP…IVHI, FLLS…LAVT, WLFF…ALVL, MVPE…TVIA, IYLP…VLLF, YGIA…VVIW, AAVA…FFSA, and LFEG…TIWT.

The protein belongs to the HAK/KUP transporter (TC 2.A.72) family.

It is found in the cell inner membrane. The enzyme catalyses K(+)(in) + H(+)(in) = K(+)(out) + H(+)(out). Transport of potassium into the cell. Likely operates as a K(+):H(+) symporter. The protein is Probable potassium transport system protein Kup 2 of Bradyrhizobium sp. (strain BTAi1 / ATCC BAA-1182).